Reading from the N-terminus, the 521-residue chain is Glutamate--cysteine ligase (521 aa).

This sequence belongs to the glutamate--cysteine ligase type 1 family. Type 1 subfamily.

The enzyme catalyses L-cysteine + L-glutamate + ATP = gamma-L-glutamyl-L-cysteine + ADP + phosphate + H(+). It participates in sulfur metabolism; glutathione biosynthesis; glutathione from L-cysteine and L-glutamate: step 1/2. This is Glutamate--cysteine ligase (gshA) from Buchnera aphidicola subsp. Baizongia pistaciae (strain Bp).